The chain runs to 276 residues: Small ribosomal subunit protein uS2 (276 aa).

It belongs to the universal ribosomal protein uS2 family.

This Chlamydia abortus (strain DSM 27085 / S26/3) (Chlamydophila abortus) protein is Small ribosomal subunit protein uS2.